The chain runs to 449 residues: C4-dicarboxylate transport protein (449 aa).

The next 8 helical transmembrane spans lie at proline 18 to glycine 38, methionine 61 to valine 81, valine 93 to valine 113, phenylalanine 159 to alanine 179, leucine 202 to isoleucine 222, serine 244 to leucine 264, glycine 311 to alanine 331, and alanine 369 to valine 389.

Belongs to the dicarboxylate/amino acid:cation symporter (DAACS) (TC 2.A.23) family.

It localises to the cell inner membrane. In terms of biological role, responsible for the transport of dicarboxylates such as succinate, fumarate, and malate from the periplasm across the membrane. This chain is C4-dicarboxylate transport protein, found in Xylella fastidiosa (strain M12).